A 306-amino-acid polypeptide reads, in one-letter code: 4-hydroxy-tetrahydrodipicolinate synthase (306 aa).

A pyruvate-binding site is contributed by threonine 46. The active-site Proton donor/acceptor is the tyrosine 134. Lysine 162 functions as the Schiff-base intermediate with substrate in the catalytic mechanism. A pyruvate-binding site is contributed by valine 204.

Belongs to the DapA family. As to quaternary structure, homotetramer; dimer of dimers.

Its subcellular location is the cytoplasm. The enzyme catalyses L-aspartate 4-semialdehyde + pyruvate = (2S,4S)-4-hydroxy-2,3,4,5-tetrahydrodipicolinate + H2O + H(+). It participates in amino-acid biosynthesis; L-lysine biosynthesis via DAP pathway; (S)-tetrahydrodipicolinate from L-aspartate: step 3/4. Catalyzes the condensation of (S)-aspartate-beta-semialdehyde [(S)-ASA] and pyruvate to 4-hydroxy-tetrahydrodipicolinate (HTPA). This is 4-hydroxy-tetrahydrodipicolinate synthase from Synechococcus sp. (strain JA-2-3B'a(2-13)) (Cyanobacteria bacterium Yellowstone B-Prime).